A 368-amino-acid chain; its full sequence is Phosphate acyltransferase (368 aa).

A disordered region spans residues 334–368 (AAPLGESGRDANGAGQASPSAGQPAEPSAALSSKT).

Belongs to the PlsX family. As to quaternary structure, homodimer. Probably interacts with PlsY.

Its subcellular location is the cytoplasm. The catalysed reaction is a fatty acyl-[ACP] + phosphate = an acyl phosphate + holo-[ACP]. It participates in lipid metabolism; phospholipid metabolism. Its function is as follows. Catalyzes the reversible formation of acyl-phosphate (acyl-PO(4)) from acyl-[acyl-carrier-protein] (acyl-ACP). This enzyme utilizes acyl-ACP as fatty acyl donor, but not acyl-CoA. This Burkholderia pseudomallei (strain 1106a) protein is Phosphate acyltransferase.